The chain runs to 440 residues: 3-phosphoshikimate 1-carboxyvinyltransferase (440 aa).

Residues Lys-28, Ser-29, and Arg-33 each contribute to the 3-phosphoshikimate site. Phosphoenolpyruvate is bound at residue Lys-28. Positions 98 and 126 each coordinate phosphoenolpyruvate. 3-phosphoshikimate contacts are provided by Ser-171, Gln-173, Asp-318, and Lys-345. Phosphoenolpyruvate is bound at residue Gln-173. Asp-318 (proton acceptor) is an active-site residue. Positions 349 and 391 each coordinate phosphoenolpyruvate.

It belongs to the EPSP synthase family. As to quaternary structure, monomer.

The protein localises to the cytoplasm. The enzyme catalyses 3-phosphoshikimate + phosphoenolpyruvate = 5-O-(1-carboxyvinyl)-3-phosphoshikimate + phosphate. It participates in metabolic intermediate biosynthesis; chorismate biosynthesis; chorismate from D-erythrose 4-phosphate and phosphoenolpyruvate: step 6/7. Its function is as follows. Catalyzes the transfer of the enolpyruvyl moiety of phosphoenolpyruvate (PEP) to the 5-hydroxyl of shikimate-3-phosphate (S3P) to produce enolpyruvyl shikimate-3-phosphate and inorganic phosphate. The sequence is that of 3-phosphoshikimate 1-carboxyvinyltransferase from Anaeromyxobacter dehalogenans (strain 2CP-C).